The chain runs to 561 residues: DNA ligase B (561 aa).

Catalysis depends on Lys125, which acts as the N6-AMP-lysine intermediate.

Belongs to the NAD-dependent DNA ligase family. LigB subfamily.

It catalyses the reaction NAD(+) + (deoxyribonucleotide)n-3'-hydroxyl + 5'-phospho-(deoxyribonucleotide)m = (deoxyribonucleotide)n+m + AMP + beta-nicotinamide D-nucleotide.. Catalyzes the formation of phosphodiester linkages between 5'-phosphoryl and 3'-hydroxyl groups in double-stranded DNA using NAD as a coenzyme and as the energy source for the reaction. This Escherichia coli O127:H6 (strain E2348/69 / EPEC) protein is DNA ligase B.